Here is a 420-residue protein sequence, read N- to C-terminus: Phytoene synthase 1, chloroplastic (420 aa).

Residues 1 to 70 (MAAITLLRSA…GEIARTSPVY (70 aa)) constitute a chloroplast transit peptide.

It belongs to the phytoene/squalene synthase family. Expressed in leaves. Highly expressed in developing leaves. Expressed at low levels in roots.

The protein localises to the plastid. It localises to the chloroplast membrane. The protein resides in the chloroplast. Its subcellular location is the plastoglobule. It catalyses the reaction 2 (2E,6E,10E)-geranylgeranyl diphosphate = 15-cis-phytoene + 2 diphosphate. Functionally, catalyzes the conversion of geranylgeranyl diphosphate to phytoene. Mediates the first committed step in carotenoid biosynthesis. In Oryza sativa subsp. japonica (Rice), this protein is Phytoene synthase 1, chloroplastic.